We begin with the raw amino-acid sequence, 540 residues long: MSSSSSGNSRHFGRVAPVVLAILDGWGHREELEHNSIRSAETPIMDALWHAYPHTLIEASGAAVGLPDNQMGNSEVGHLTIGAGRVIRQELVRISETVQTGRLGQTPALIALAERLRKSDGTLHLLGLCSDGGVHSHINHLCGLLHWAAAAGLNKVALHLITDGRDTPTQSASNYLHQIEDAINASGVGELASLCGRYWAMDRDHRWERTIRAYEVLTDPNQSISRVTAEDVLSASYANGTTDEFLEPTRLSNNYFKDGDGLVMFNFRPDRARQLVQSLTLPDFDGFPRANQPSLDVVTFTQYEHDLPVAVAFPAESLDDLLGQVVSEHGLRQYRTAETEKYPHVTYFMNGGIEQPLAGEERHLVPSPRVATYDLAPAMSADTLTESCVKAIESGVYSLVIINYANPDMVGHTGVMGAAQEAISTVDRCIGRLLDSTGRMGGTLLITADHGNAELMQGSDGQAWTAHTTNPVPVILVEGEKRKLSGYGNDIQLRAGGGLADIAPTLLQLLDLPKPDAMSGLTLIQAIESPTPSARLPQPV.

Residues aspartate 24 and serine 74 each coordinate Mn(2+). Serine 74 functions as the Phosphoserine intermediate in the catalytic mechanism. Substrate-binding positions include histidine 135, 165-166 (RD), arginine 197, arginine 203, 268-271 (RPDR), and lysine 341. The Mn(2+) site is built by aspartate 408, histidine 412, aspartate 449, histidine 450, and histidine 467.

It belongs to the BPG-independent phosphoglycerate mutase family. In terms of assembly, monomer. Requires Mn(2+) as cofactor.

The catalysed reaction is (2R)-2-phosphoglycerate = (2R)-3-phosphoglycerate. The protein operates within carbohydrate degradation; glycolysis; pyruvate from D-glyceraldehyde 3-phosphate: step 3/5. Its function is as follows. Catalyzes the interconversion of 2-phosphoglycerate and 3-phosphoglycerate. This is 2,3-bisphosphoglycerate-independent phosphoglycerate mutase from Prochlorococcus marinus (strain MIT 9303).